A 252-amino-acid polypeptide reads, in one-letter code: Uridylate kinase (252 aa).

20–23 (KLSG) provides a ligand contact to ATP. The involved in allosteric activation by GTP stretch occupies residues 28 to 33 (GGGGLG). Gly-62 lines the UMP pocket. Residues Gly-63 and Arg-67 each contribute to the ATP site. Residues Asp-82 and 143-150 (MGMPYFST) each bind UMP. ATP-binding residues include Asn-171, Tyr-177, and Asp-180.

Belongs to the UMP kinase family. Homohexamer.

It is found in the cytoplasm. The catalysed reaction is UMP + ATP = UDP + ADP. Its pathway is pyrimidine metabolism; CTP biosynthesis via de novo pathway; UDP from UMP (UMPK route): step 1/1. With respect to regulation, allosterically activated by GTP. Inhibited by UTP. Functionally, catalyzes the reversible phosphorylation of UMP to UDP. In Streptomyces avermitilis (strain ATCC 31267 / DSM 46492 / JCM 5070 / NBRC 14893 / NCIMB 12804 / NRRL 8165 / MA-4680), this protein is Uridylate kinase.